Consider the following 810-residue polypeptide: Protein kinase C-binding protein NELL1 (810 aa).

Positions 1-21 (MPMDVILVLWFCVCTARTVLG) are cleaved as a signal peptide. Asn40, Asn53, Asn83, Asn224, Asn294, and Asn372 each carry an N-linked (GlcNAc...) asparagine glycan. The Laminin G-like domain occupies 57–227 (AFLFQDVQRE…TQCPNLNRTC (171 aa)). Residues 271-332 (KTCQVSGLLY…ISGQCCKVCR (62 aa)) enclose the VWFC 1 domain. 3 disulfides stabilise this stretch: Cys395–Cys407, Cys401–Cys416, and Cys418–Cys432. 3 residues coordinate Ca(2+): Asp434, Ile435, and Glu437. In terms of domain architecture, EGF-like 1; calcium-binding spans 434-475 (DIDECAAKMHYCHANTVCVNLPGLYRCDCVPGYIRVDDFSCT). Disulfide bonds link Cys438–Cys451, Cys445–Cys460, Cys462–Cys474, Cys480–Cys493, Cys487–Cys502, Cys504–Cys515, Cys519–Cys529, Cys523–Cys535, Cys537–Cys546, Cys553–Cys566, Cys560–Cys575, Cys577–Cys594, Cys600–Cys613, Cys607–Cys622, and Cys624–Cys630. Residues Asn453, Leu454, and Leu457 each contribute to the Ca(2+) site. The EGF-like 2; calcium-binding domain maps to 476-516 (EHDDCGSGQHNCDKNAICTNTVQGHSCTCQPGYVGNGTICK). Asn511 carries N-linked (GlcNAc...) asparagine glycosylation. Residues 517–547 (AFCEEGCRYGGTCVAPNKCVCPSGFTGSHCE) enclose the EGF-like 3 domain. The 39-residue stretch at 549-587 (DIDECAEGFVECHNHSRCVNLPGWYHCECRSGFHDDGTY) folds into the EGF-like 4; calcium-binding domain. The N-linked (GlcNAc...) asparagine glycan is linked to Asn562. Positions 596 to 631 (DIDECALRTHTCWNDSACINLAGGFDCLCPSGPSCS) constitute an EGF-like 5; calcium-binding domain. A glycan (N-linked (GlcNAc...) asparagine) is linked at Asn609. 2 VWFC domains span residues 632–687 (GDCP…PECD) and 692–750 (SQCL…PRCV). Asn708 is a glycosylation site (N-linked (GlcNAc...) asparagine).

As to quaternary structure, interacts with ATRAID; the interaction promotes osteoblast cell differentiation and mineralization. Homotrimer. Binds to PKC beta-1. Interacts with ROBO3.

It localises to the cytoplasm. It is found in the nucleus envelope. The protein resides in the secreted. Plays a role in the control of cell growth and differentiation. Promotes osteoblast cell differentiation and terminal mineralization. The polypeptide is Protein kinase C-binding protein NELL1 (Nell1) (Rattus norvegicus (Rat)).